Here is a 338-residue protein sequence, read N- to C-terminus: MVQITKGKFDGLQRLSNEKGVIAALAIDQRGSLKKMIQQAKGTENKKDVEDFKQLVSEELTPYASAILLDLEYGTPAIKARHEGSGLLTSYEKTGYDATTPGKLPDLIEDLSALRIKENGGDAVKILVYYDPDEPAEINEIKYAFLERIGAECRAVDIPFFLEPITYDATVTDSGSLEYAKLKPAKVKASIKEFSKPRYGVDVLKLEVPVNFKYVEGFAEGEVAYTQDEAARHFEECSDLSPLPFIYLSAGVTSEMFHKTIQFANQHNVQYSGVLCGRATWADGIEVYGKQGDDALREWLRTQGKENITSLDKLLDEGAVPWWTKYGSFEDVHVVEKQ.

This sequence belongs to the aldolase LacD family.

It carries out the reaction D-tagatofuranose 1,6-bisphosphate = D-glyceraldehyde 3-phosphate + dihydroxyacetone phosphate. It functions in the pathway carbohydrate metabolism; D-tagatose 6-phosphate degradation; D-glyceraldehyde 3-phosphate and glycerone phosphate from D-tagatose 6-phosphate: step 2/2. In Listeria monocytogenes serotype 4b (strain CLIP80459), this protein is Tagatose 1,6-diphosphate aldolase.